A 185-amino-acid polypeptide reads, in one-letter code: Putative sulfur carrier protein YrkF (185 aa).

C15 functions as the Cysteine persulfide intermediate in the catalytic mechanism. Positions 101–185 (SDESLNILDV…GMRDWTGKTE (85 aa)) constitute a Rhodanese domain.

The protein belongs to the sulfur carrier protein TusA family.

The polypeptide is Putative sulfur carrier protein YrkF (yrkF) (Bacillus subtilis (strain 168)).